An 87-amino-acid chain; its full sequence is Putative defensin-like protein 238 (87 aa).

A signal peptide spans 1–23 (MRSITWFIVFCVFMFIALNHVKG). Cystine bridges form between Cys30/Cys87, Cys40/Cys65, Cys48/Cys78, and Cys63/Cys80.

Belongs to the DEFL family.

It is found in the secreted. This Arabidopsis thaliana (Mouse-ear cress) protein is Putative defensin-like protein 238 (SCRL16).